Consider the following 276-residue polypeptide: NADPH-dependent 7-cyano-7-deazaguanine reductase (276 aa).

Substrate is bound at residue 80–82 (VES). An NADPH-binding site is contributed by 82–83 (SK). Residue Cys-183 is the Thioimide intermediate of the active site. Asp-190 acts as the Proton donor in catalysis. Substrate is bound at residue 222-223 (HE). 251–252 (RG) is an NADPH binding site.

It belongs to the GTP cyclohydrolase I family. QueF type 2 subfamily. Homodimer.

Its subcellular location is the cytoplasm. It catalyses the reaction 7-aminomethyl-7-carbaguanine + 2 NADP(+) = 7-cyano-7-deazaguanine + 2 NADPH + 3 H(+). It functions in the pathway tRNA modification; tRNA-queuosine biosynthesis. Functionally, catalyzes the NADPH-dependent reduction of 7-cyano-7-deazaguanine (preQ0) to 7-aminomethyl-7-deazaguanine (preQ1). The sequence is that of NADPH-dependent 7-cyano-7-deazaguanine reductase from Burkholderia orbicola (strain MC0-3).